A 103-amino-acid chain; its full sequence is Cell division protein CrgA (103 aa).

The next 2 membrane-spanning stretches (helical) occupy residues 49-69 and 80-100; these read FVPL…VYYL and IGAW…LMTM.

This sequence belongs to the CrgA family.

It is found in the cell membrane. In terms of biological role, involved in cell division. The chain is Cell division protein CrgA from Bifidobacterium longum (strain NCC 2705).